Consider the following 272-residue polypeptide: UPF0759 protein YecE (272 aa).

It belongs to the UPF0759 family.

This Escherichia coli O157:H7 protein is UPF0759 protein YecE (yecE).